A 330-amino-acid polypeptide reads, in one-letter code: Putative [LysW]-L-2-aminoadipate/[LysW]-L-glutamate phosphate reductase (330 aa).

Residues 10-13 (SGYI) and 34-36 (SRR) each bind NADP(+). Residue Cys-142 is part of the active site. Residue Asn-297 coordinates NADP(+).

It belongs to the NAGSA dehydrogenase family. Type 1 subfamily. LysY sub-subfamily.

The protein localises to the cytoplasm. The catalysed reaction is [amino-group carrier protein]-C-terminal-N-(1-carboxy-5-oxopentan-1-yl)-L-glutamine + phosphate + NADP(+) = [amino-group carrier protein]-C-terminal-N-(1-carboxy-5-phosphooxy-5-oxopentan-1-yl)-L-glutamine + NADPH + H(+). It carries out the reaction [amino-group carrier protein]-C-terminal-gamma-(L-glutamyl-5-semialdehyde)-L-glutamate + phosphate + NADP(+) = [amino-group carrier protein]-C-terminal-gamma-(5-phospho-L-glutamyl)-L-glutamate + NADPH + H(+). It participates in amino-acid biosynthesis; L-lysine biosynthesis via AAA pathway; L-lysine from L-alpha-aminoadipate (Thermus route): step 3/5. The protein operates within amino-acid biosynthesis; L-arginine biosynthesis. In terms of biological role, involved in both the arginine and lysine biosynthetic pathways. In Thermococcus kodakarensis (strain ATCC BAA-918 / JCM 12380 / KOD1) (Pyrococcus kodakaraensis (strain KOD1)), this protein is Putative [LysW]-L-2-aminoadipate/[LysW]-L-glutamate phosphate reductase.